A 134-amino-acid chain; its full sequence is Protein NrdI (134 aa).

Belongs to the NrdI family.

In terms of biological role, probably involved in ribonucleotide reductase function. The protein is Protein NrdI of Rhizobium leguminosarum bv. trifolii (strain WSM2304).